We begin with the raw amino-acid sequence, 1167 residues long: Integrin alpha-E (1167 aa).

The first 19 residues, M1–A19, serve as a signal peptide directing secretion. Topologically, residues F20 to S1114 are extracellular. FG-GAP repeat units follow at residues A27 to I81 and Q84 to Q142. N-linked (GlcNAc...) asparagine glycosylation is present at N51. 2 disulfides stabilise this stretch: C72–C83 and C130–C164. Positions E149–D192 are X-domain (extra domain). The interval Y163–E191 is disordered. Residues G193 to M382 enclose the VWFA domain. Residues N256, N314, N341, N364, N418, and N437 are each glycosylated (N-linked (GlcNAc...) asparagine). An FG-GAP 3 repeat occupies E383–F435. FG-GAP repeat units lie at residues Q438–D491, A492–F552, A555–D619, and Q623–D683. Ca(2+) contacts are provided by D514, D516, D518, D522, D578, N580, D582, D586, D646, N648, D650, and D654. Cysteines 698 and 754 form a disulfide. Residues N718 and N773 are each glycosylated (N-linked (GlcNAc...) asparagine). C814 and C820 are disulfide-bonded. N-linked (GlcNAc...) asparagine glycosylation is found at N829 and N846. A disulfide bridge connects residues C884 and C898. Residues N911, N925, N968, and N1013 are each glycosylated (N-linked (GlcNAc...) asparagine). Cystine bridges form between C998-C1023 and C1031-C1047. N1055 and N1086 each carry an N-linked (GlcNAc...) asparagine glycan. A helical transmembrane segment spans residues L1115–F1137. The Cytoplasmic portion of the chain corresponds to K1138–D1167. Positions G1140–R1144 match the GFFKR motif motif.

The protein belongs to the integrin alpha chain family. As to quaternary structure, heterodimer of an alpha and a beta subunit. The alpha subunit is composed of a heavy and a light chains linked by a disulfide bond. Alpha-E associates with beta-7.

The protein localises to the membrane. Integrin alpha-E/beta-7 is a receptor for E-cadherin. It mediates adhesion of intra-epithelial T-lymphocytes to epithelial cell monolayers. Mice expressing a null mutation of the alpha-E subunit gene exhibit a marked reduction in the numbers of intraepithelial lymphocytes in the gut and in the development of gut-associated lymphoid aggregates, supporting a specific role for this integrin in mediating retention of lymphocytes in the intestinal wall. This chain is Integrin alpha-E (Itgae), found in Mus musculus (Mouse).